The chain runs to 334 residues: Glyceraldehyde-3-phosphate dehydrogenase (334 aa).

Residues 12–13 (RI), D35, R79, and S121 contribute to the NAD(+) site. D-glyceraldehyde 3-phosphate contacts are provided by residues 152–154 (SCT), T183, R198, 211–212 (TG), and R234. Catalysis depends on C153, which acts as the Nucleophile. N315 provides a ligand contact to NAD(+).

It belongs to the glyceraldehyde-3-phosphate dehydrogenase family. As to quaternary structure, homotetramer.

Its subcellular location is the cytoplasm. It carries out the reaction D-glyceraldehyde 3-phosphate + phosphate + NAD(+) = (2R)-3-phospho-glyceroyl phosphate + NADH + H(+). The protein operates within carbohydrate degradation; glycolysis; pyruvate from D-glyceraldehyde 3-phosphate: step 1/5. Its function is as follows. Catalyzes the oxidative phosphorylation of glyceraldehyde 3-phosphate (G3P) to 1,3-bisphosphoglycerate (BPG) using the cofactor NAD. The first reaction step involves the formation of a hemiacetal intermediate between G3P and a cysteine residue, and this hemiacetal intermediate is then oxidized to a thioester, with concomitant reduction of NAD to NADH. The reduced NADH is then exchanged with the second NAD, and the thioester is attacked by a nucleophilic inorganic phosphate to produce BPG. This chain is Glyceraldehyde-3-phosphate dehydrogenase (gap), found in Corynebacterium glutamicum (strain ATCC 13032 / DSM 20300 / JCM 1318 / BCRC 11384 / CCUG 27702 / LMG 3730 / NBRC 12168 / NCIMB 10025 / NRRL B-2784 / 534).